We begin with the raw amino-acid sequence, 121 residues long: Small ribosomal subunit protein uS13 (121 aa).

Positions 94–121 are disordered; the sequence is GLPLRGQRTRTNARTRKGPRRAAQSLKK.

It belongs to the universal ribosomal protein uS13 family. In terms of assembly, part of the 30S ribosomal subunit. Forms a loose heterodimer with protein S19. Forms two bridges to the 50S subunit in the 70S ribosome.

Functionally, located at the top of the head of the 30S subunit, it contacts several helices of the 16S rRNA. In the 70S ribosome it contacts the 23S rRNA (bridge B1a) and protein L5 of the 50S subunit (bridge B1b), connecting the 2 subunits; these bridges are implicated in subunit movement. Contacts the tRNAs in the A and P-sites. The protein is Small ribosomal subunit protein uS13 of Paraburkholderia phytofirmans (strain DSM 17436 / LMG 22146 / PsJN) (Burkholderia phytofirmans).